The chain runs to 173 residues: Shikimate kinase (173 aa).

14–19 (GAGKST) is an ATP binding site. Mg(2+) is bound at residue S18. Substrate-binding residues include D36, R60, and G82. Residue R120 participates in ATP binding. R140 provides a ligand contact to substrate. Q157 contributes to the ATP binding site.

The protein belongs to the shikimate kinase family. Monomer. Mg(2+) is required as a cofactor.

Its subcellular location is the cytoplasm. The enzyme catalyses shikimate + ATP = 3-phosphoshikimate + ADP + H(+). It participates in metabolic intermediate biosynthesis; chorismate biosynthesis; chorismate from D-erythrose 4-phosphate and phosphoenolpyruvate: step 5/7. In terms of biological role, catalyzes the specific phosphorylation of the 3-hydroxyl group of shikimic acid using ATP as a cosubstrate. The sequence is that of Shikimate kinase from Buchnera aphidicola subsp. Schizaphis graminum (strain Sg).